Here is a 233-residue protein sequence, read N- to C-terminus: Purine nucleoside phosphorylase DeoD-type (233 aa).

A purine D-ribonucleoside is bound at residue His-4. Phosphate is bound by residues Gly-20, Arg-24, Arg-43, and 87–90 (RIGT). A purine D-ribonucleoside-binding positions include 179–181 (EME) and 203–204 (SD). Asp-204 functions as the Proton donor in the catalytic mechanism.

This sequence belongs to the PNP/UDP phosphorylase family. Homohexamer; trimer of homodimers.

The enzyme catalyses a purine D-ribonucleoside + phosphate = a purine nucleobase + alpha-D-ribose 1-phosphate. It catalyses the reaction a purine 2'-deoxy-D-ribonucleoside + phosphate = a purine nucleobase + 2-deoxy-alpha-D-ribose 1-phosphate. Catalyzes the reversible phosphorolytic breakdown of the N-glycosidic bond in the beta-(deoxy)ribonucleoside molecules, with the formation of the corresponding free purine bases and pentose-1-phosphate. The polypeptide is Purine nucleoside phosphorylase DeoD-type (Helicobacter pylori (strain G27)).